The sequence spans 581 residues: MDIQRSILIVALAVVSYLMVLQWNEDYGQAALPAEVSSSTAATPALPDTPADTASTGGDDIPTAVAEPTAAAVAPTAAASDELIRVKTDVLDLAIDPRGGDIVQLRLPQYPRRQDRPDVPFQLFDNGSERTYLAQSGLIGQNAPDKSSGRALWSSEKQSYEMADGQDSLVVDLTYSENGVSYIKRYSFKRGLNPQCSAREQQLKKPGCVDPSAYQVDVRYLIDNQSDQAWSGNLFAQLKRDNSGDPSSTTATGTATYLGAALWTSDEPYKKVSMKDIDKQSFKETVQGGWVAWLQHYFVTAWVPSKDSTNLVQTRKDSQGNYIVGFTGPAVQVAAGAQGETGAILYAGPKLQEHLGKLSPGLELTVDYGFLWFLAQPIFWLLEVIHGLLGNWGWSIIVLTIIIKLIFFPLSAASYRSMARMRAVSPKLQALKEQHGDDRQKMSQAMMELYKKEKINPLGGCLPILVQMPVFLALYWVLLESVEMRQAPWMFWITDLSIKDPFFILPIIMGATMFIQQQLNPTPPDPMQARVLKLMPIIFTFFFLWFPAGLVLYWVVNNILSIGQQWYITRKIEAAAKPANA.

The chain crosses the membrane as a helical span at residues 7–27 (ILIVALAVVSYLMVLQWNEDY). Positions 41-62 (AATPALPDTPADTASTGGDDIP) are disordered. The next 5 membrane-spanning stretches (helical) occupy residues 365–385 (TVDY…LEVI), 388–408 (LLGN…LIFF), 458–478 (LGGC…YWVL), 489–509 (WMFW…PIIM), and 536–556 (PIIF…YWVV).

Belongs to the OXA1/ALB3/YidC family. Type 1 subfamily. In terms of assembly, interacts with the Sec translocase complex via SecD. Specifically interacts with transmembrane segments of nascent integral membrane proteins during membrane integration.

It localises to the cell inner membrane. Functionally, required for the insertion and/or proper folding and/or complex formation of integral membrane proteins into the membrane. Involved in integration of membrane proteins that insert both dependently and independently of the Sec translocase complex, as well as at least some lipoproteins. Aids folding of multispanning membrane proteins. This chain is Membrane protein insertase YidC, found in Ectopseudomonas mendocina (strain ymp) (Pseudomonas mendocina).